A 274-amino-acid polypeptide reads, in one-letter code: Rhamnulose-1-phosphate aldolase (274 aa).

The active site involves glutamate 117. 3 residues coordinate Zn(2+): histidine 141, histidine 143, and histidine 212.

It belongs to the aldolase class II family. RhaD subfamily. Homotetramer. Requires Zn(2+) as cofactor.

It localises to the cytoplasm. The enzyme catalyses L-rhamnulose 1-phosphate = (S)-lactaldehyde + dihydroxyacetone phosphate. The protein operates within carbohydrate degradation; L-rhamnose degradation; glycerone phosphate from L-rhamnose: step 3/3. In terms of biological role, catalyzes the reversible cleavage of L-rhamnulose-1-phosphate to dihydroxyacetone phosphate (DHAP) and L-lactaldehyde. The protein is Rhamnulose-1-phosphate aldolase of Escherichia coli O81 (strain ED1a).